We begin with the raw amino-acid sequence, 144 residues long: MNPSRCRILAVGKVRRDWIQKGIELYLKRLPGLTVTELRDSSPEKEADSIRAALRPDETLIALMEQGECLGSIPFARRLKQFENERLVFVIGGADGLTAELKLQAQWQLSLSPLTFPHELARLMLVEQLFRAQSIVQGRPYHRA.

Residues Leu63, Gly92, and 111–116 (LSPLTF) contribute to the S-adenosyl-L-methionine site.

The protein belongs to the RNA methyltransferase RlmH family. Homodimer.

It is found in the cytoplasm. It catalyses the reaction pseudouridine(1915) in 23S rRNA + S-adenosyl-L-methionine = N(3)-methylpseudouridine(1915) in 23S rRNA + S-adenosyl-L-homocysteine + H(+). Its function is as follows. Specifically methylates the pseudouridine at position 1915 (m3Psi1915) in 23S rRNA. The chain is Ribosomal RNA large subunit methyltransferase H from Synechococcus sp. (strain CC9902).